A 115-amino-acid polypeptide reads, in one-letter code: Parathyroid hormone (115 aa).

The first 25 residues, 1-25, serve as a signal peptide directing secretion; the sequence is MMSAKDTVKVMVVMLAICFLARSDG. The propeptide occupies 26-31; sequence KPIKKR. The important for receptor binding stretch occupies residues 51–69; the sequence is RVEWLRKKLQDVHNFVALG. A disordered region spans residues 75–98; sequence RDGGSQRPRKKEDNVLVESHQKSL.

This sequence belongs to the parathyroid hormone family. As to quaternary structure, interacts with PTH1R (via N-terminal extracellular domain).

It localises to the secreted. In terms of biological role, parathyroid hormone elevates calcium level by dissolving the salts in bone and preventing their renal excretion. Acts by binding to its receptor, PTH1R, activating G protein-coupled receptor signaling. Stimulates [1-14C]-2-deoxy-D-glucose (2DG) transport and glycogen synthesis in osteoblastic cells. In Sus scrofa (Pig), this protein is Parathyroid hormone (PTH).